The primary structure comprises 291 residues: Meteorin (291 aa).

Positions 1–21 (MLVAALLCALCCGLLAASARA) are cleaved as a signal peptide. Intrachain disulfides connect Cys28–Cys49, Cys80–Cys116, Cys169–Cys240, Cys172–Cys264, and Cys182–Cys286.

This sequence belongs to the meteorin family. In terms of assembly, monomer.

Its subcellular location is the secreted. Involved in both glial cell differentiation and axonal network formation during neurogenesis. Promotes astrocyte differentiation and transforms cerebellar astrocytes into radial glia. Also induces axonal extension in small and intermediate neurons of sensory ganglia by activating nearby satellite glia. The protein is Meteorin (Metrn) of Rattus norvegicus (Rat).